The primary structure comprises 838 residues: Axin-2 (838 aa).

Residues 1–75 (MSSAVLVTLL…EGRASPDSPL (75 aa)) are disordered. The Tankyrase-binding motif signature appears at 21–30 (APRPPVPGEE). Positions 42-55 (KVQSTKPMPVSSNA) are enriched in polar residues. A compositionally biased stretch (basic and acidic residues) spans 56 to 69 (RRNEDGLGEPEGRA). The RGS domain maps to 81–200 (SLHSLLGDQD…LTSDIYLEYV (120 aa)). Disordered regions lie at residues 300–333 (SELS…KKQL), 398–435 (IRED…EEDP), 450–483 (PGCQ…LLPT), 568–682 (GSRG…AMPP), and 712–744 (VASQ…DHKE). Positions 303-318 (SSDALTDDSMSMTDSS) are enriched in low complexity. Residues 327-413 (MGSKKQLQRE…KEGSEQALSS (87 aa)) are interaction with GSK3B. Residues 413–476 (SRDGAPVQHP…PDHHHHHHQQ (64 aa)) are interaction with beta-catenin. A compositionally biased stretch (polar residues) spans 727 to 737 (AGPTSFSNPSL). Residues 756–838 (ASELIVTYFF…RILGKVERID (83 aa)) form the DIX domain.

As to quaternary structure, interacts with SMAD7 and RNF111. Interacts with ANKRD6. Interacts with glycogen synthase kinase-3 beta (GSK3B) and beta-catenin. The interaction between axin and beta-catenin occurs via the armadillo repeats contained in beta-catenin. Interacts with SIAH1. Interacts with SIAH2. In terms of processing, ADP-ribosylated by tankyrase TNKS and TNKS2. Poly-ADP-ribosylated protein is recognized by RNF146, followed by ubiquitination and subsequent activation of the Wnt signaling pathway. Post-translationally, ubiquitinated by RNF146 when poly-ADP-ribosylated, leading to its degradation and subsequent activation of the Wnt signaling pathway. Deubiquitinated by USP34, deubiquitinated downstream of beta-catenin stabilization step: deubiquitination is important Wnt signaling to positively regulate beta-catenin (CTNBB1)-mediated transcription. Probably phosphorylated by GSK3B and dephosphorylated by PP2A. In terms of tissue distribution, expressed in lung and thymus.

The protein localises to the cytoplasm. Functionally, inhibitor of the Wnt signaling pathway. Down-regulates beta-catenin. Probably facilitate the phosphorylation of beta-catenin and APC by GSK3B. This Rattus norvegicus (Rat) protein is Axin-2 (Axin2).